We begin with the raw amino-acid sequence, 638 residues long: Chaperone protein DnaK (638 aa).

The residue at position 196 (T196) is a Phosphothreonine; by autocatalysis. A disordered region spans residues 592-638; that stretch reads ASNLYQQPGAEAGAAPQPETNGQQESKGGDGAVNAEYEVIDGDDDKK. The segment covering 597 to 610 has biased composition (low complexity); it reads QQPGAEAGAAPQPE. The span at 629–638 shows a compositional bias: acidic residues; the sequence is EVIDGDDDKK.

Belongs to the heat shock protein 70 family.

In terms of biological role, acts as a chaperone. In Chlorobaculum parvum (strain DSM 263 / NCIMB 8327) (Chlorobium vibrioforme subsp. thiosulfatophilum), this protein is Chaperone protein DnaK.